A 359-amino-acid polypeptide reads, in one-letter code: Protein RecA (359 aa).

69 to 76 (GPESSGKT) is a binding site for ATP. Positions 337–359 (SANSVAKASEEDEEEEVDLEPEE) are disordered. Acidic residues predominate over residues 346–359 (EEDEEEEVDLEPEE).

The protein belongs to the RecA family.

Its subcellular location is the cytoplasm. Its function is as follows. Can catalyze the hydrolysis of ATP in the presence of single-stranded DNA, the ATP-dependent uptake of single-stranded DNA by duplex DNA, and the ATP-dependent hybridization of homologous single-stranded DNAs. It interacts with LexA causing its activation and leading to its autocatalytic cleavage. The protein is Protein RecA of Nostoc punctiforme (strain ATCC 29133 / PCC 73102).